A 2254-amino-acid polypeptide reads, in one-letter code: MAGSVNGNHSAVGPGINYETVSQVDEFCKALRGKRPIHSILIANNGMAAVKFIRSVRTWAYETFGTEKAILLVGMATPEDMRINAEHIRIADQFVEVPGGTNNNNYANVQLIVEMAEVTRVDAVWPGWGHASENPELPDALDAKGIIFLGPPASSMAALGDKIGSSLIAQAADVPTLPWSGSHVKIPPNSNLVTIPEEIYRQACVYTTEEAIASCQVVGYPAMIKASWGGGGKGIRKVHNDDEVRALFKQVQGEVPGSPIFIMKVASQSRHLEVQLLCDKHGNVSALHSRDCSVQRRHQKIIEEGPITVAPPETVKKLEQAARRLAKSVNYVGAATVEYLYSMDTGEYYFLELNPRLQVEHPVTEWIAEINLPAAQVAVGMGIPLWQIPEIRRFYGIEHGGGYDSWRKTSVVAFPFDFDKAQSIRPKGHCVAVRVTSEDPDDGFKPTSGRVQELSFKSKPNVWAYFSVKSGGGIHEFSDSQFGHVFAFGESRALAIANMVLGLKEIQIRGEIRTNVDYTIDLLHASDYRDNKIHTGWLDSRIAMRVRAERPPWYLSVVGGALYKASATSAAVVSDYVGYLEKGQIPPKHISLVHSQVSLNIEGSKYTIDVVRGGSGTYRLRMNKSEVVAEIHTLRDGGLLMQLDGKSHVIYAEEEAAGTRLLIDGRTCLLQNDHDPSKLMAETPCKLMRYLISDNSNIDADTPYAEVEVMKMCMPLLSPASGVIHFKMSEGQAMQAGELIANLDLDDPSAVRKAEPFHGSFPRLGLPTAISGRVHQRCAATLNAARMILAGYEHKVDEVVQDLLNCLDSPELPFLQWQECFAVLATRLPKNLRNMLESKYREFESISRNSLTTDFPAKLLKGILEAHLSSCDEKERGALERLIEPLMSLAKSYEGGRESHARVIVHSLFEEYLSVEELFNDNMLADVIERMRQLYKKDLLKIVDIVLSHQGIKNKNKLVLRLMEQLVYPNPAAYRDKLIRFSTLNHTNYSELALKASQLLEQTKLSELRSNIARSLSELEMFTEDGENMDTPKRKSAINERIEDLVSASLAVEDALVGLFDHSDHTLQRRVVETYIRRLYQPYVVKDSVRMQWHRSGLLASWEFLEEHMERKNIGLDDPDTSEKGLVEKRSKRKWGAMVIIKSLQFLPSIISAALRETKHNDYETAGAPLSGNMMHIAIVGINNQMSLLQDSGDEDQAQERVNKLAKILKEEEVSSSLCSAGVGVISCIIQRDEGRTPMRHSFHWSLEKQYYVEEPLLRHLEPPLSIYLELDKLKGYSNIQYTPSRDRQWHLYTVTDKPVPIKRMFLRSLVRQATMNDGFILQQGQDKQLSQTLISMAFTSKCVLRSLMDAMEELELNAHNAAMKPDHAHMFLCILREQQIDDLVPFPRRVEVNAEDEETTVEMILEEAAREIHRSVGVRMHRLGVCEWEVRLWLVSSGLACGAWRVVVANVTGRTCTVHIYREVETPGRNSLIYHSITKKGPLHETPISDQYKPLGYLDRQRLAARRSNTTYCYDFPLAFGTALELLWASQHPGVKKPYKDTLINVKELVFSKPEGSSGTSLDLVERPPGLNDFGMVAWCLDMSTPEFPMGRKLLVIANDVTFKAGSFGPREDAFFLAVTELACAKKLPLIYLAANSGARLGVAEEVKACFKVGWSDEISPENGFQYIYLSPEDHERIGSSVIAHEVKLSSGETRWVIDTIVGKEDGIGVENLTGSGAIAGAYSKAYNETFTLTFVSGRTVGIGAYLARLGMRCIQRLDQPIILTGFSTLNKLLGREVYSSHMQLGGPKIMGTNGVVHLTVSDDLEGVSAILNWLSYIPAYVGGPLPVLAPLDPPERIVEYVPENSCDPRAAIAGVKDNTGKWLGGIFDKNSFIETLEGWARTVVTGRAKLGGIPVGVVAVETQTVMQIIPADPGQLDSHERVVPQAGQVWFPDSAAKTAQALMDFNREELPLFILANWRGFSGGQRDLFEGILQAGSTIVENLRTYRQPVFVYIPMMGELRGGAWVVVDSQINSDYVEMYADETARGNVLEPEGTIEIKFRTKELLECMGRLDQKLISLKAKLQDAKQSEAYANIELLQQQIKAREKQLLPVYIQIATKFAELHDTSMRMAAKGVIKSVVEWSGSRSFFYKKLNRRIAESSLVKNVREASGDNLAYKSSMRLIQDWFCNSDIAKGKEEAWTDDQVFFTWKDNVSNYELKLSELRAQKLLNQLAEIGNSSDLQALPQGLANLLNKVEPSKREELVAAIRKVLG.

Residues 36–543 form the Biotin carboxylation domain; that stretch reads PIHSILIANN…HTGWLDSRIA (508 aa). One can recognise an ATP-grasp domain in the interval 189-381; the sequence is NSNLVTIPEE…LPAAQVAVGM (193 aa). Residue 215 to 272 participates in ATP binding; sequence CQVVGYPAMIKASWGGGGKGIRKVHNDDEVRALFKQVQGEVPGSPIFIMKVASQSRHL. Positions 338, 352, and 354 each coordinate Mg(2+). Residues Glu338, Glu352, and Asn354 each contribute to the Mn(2+) site. Arg356 is a catalytic residue. One can recognise a Biotinyl-binding domain in the interval 670 to 744; sequence LQNDHDPSKL…QAGELIANLD (75 aa). Lys711 carries the post-translational modification N6-biotinyllysine. At Thr1031 the chain carries Phosphothreonine. Phosphoserine is present on Ser1192. The region spanning 1492-1831 is the CoA carboxyltransferase N-terminal domain; the sequence is QYKPLGYLDR…YVGGPLPVLA (340 aa). The carboxyltransferase stretch occupies residues 1492–2150; it reads QYKPLGYLDR…ESSLVKNVRE (659 aa). 3 residues coordinate CoA: Arg1740, Lys2041, and Arg2043. In terms of domain architecture, CoA carboxyltransferase C-terminal spans 1835–2150; that stretch reads PPERIVEYVP…ESSLVKNVRE (316 aa).

In terms of assembly, homodimer. Requires biotin as cofactor. Mg(2+) serves as cofactor. Mn(2+) is required as a cofactor. Expressed in roots, trichomes, epidermal leaf cells, siliques, petals, anthers, and seeds.

It localises to the cytoplasm. It is found in the cytosol. It catalyses the reaction hydrogencarbonate + acetyl-CoA + ATP = malonyl-CoA + ADP + phosphate + H(+). The enzyme catalyses N(6)-biotinyl-L-lysyl-[protein] + hydrogencarbonate + ATP = N(6)-carboxybiotinyl-L-lysyl-[protein] + ADP + phosphate + H(+). It functions in the pathway lipid metabolism; malonyl-CoA biosynthesis; malonyl-CoA from acetyl-CoA: step 1/1. Functionally, multifunctional enzyme that catalyzes the carboxylation of acetyl-CoA, forming malonyl-CoA, which is used in the plastid for fatty acid synthesis and in the cytosol in various biosynthetic pathways including fatty acid elongation. Required for very long chain fatty acids elongation. Necessary for embryo and plant development. Plays a central function in embryo morphogenesis, especially in apical meristem development. Involved in cell proliferation and tissue patterning. May act as a repressor of cytokinin response. This Arabidopsis thaliana (Mouse-ear cress) protein is Acetyl-CoA carboxylase 1 (ACC1).